The primary structure comprises 262 residues: Phosphatidylglycerol--prolipoprotein diacylglyceryl transferase (262 aa).

4 helical membrane passes run 9 to 29, 41 to 61, 80 to 100, and 109 to 129; these read LGPLAIRWYALCIVTGLILAV, IIPDDILDFILVAFPLAILGA, IFAIWNGGLAIYGGLITGALV, and LINTWDFLDIAAPSVMIAQSL. A 1,2-diacyl-sn-glycero-3-phospho-(1'-sn-glycerol) is bound at residue Arg131. Helical transmembrane passes span 167–187, 197–217, and 226–246; these read QPTFLYESLWNLLGFALILIF, GHITAFYLIWYGFGRMVIEGM, and GLRVSQWLSVVLIGLGIMIVI.

The protein belongs to the Lgt family.

Its subcellular location is the cell membrane. It catalyses the reaction L-cysteinyl-[prolipoprotein] + a 1,2-diacyl-sn-glycero-3-phospho-(1'-sn-glycerol) = an S-1,2-diacyl-sn-glyceryl-L-cysteinyl-[prolipoprotein] + sn-glycerol 1-phosphate + H(+). Its pathway is protein modification; lipoprotein biosynthesis (diacylglyceryl transfer). Catalyzes the transfer of the diacylglyceryl group from phosphatidylglycerol to the sulfhydryl group of the N-terminal cysteine of a prolipoprotein, the first step in the formation of mature lipoproteins. This chain is Phosphatidylglycerol--prolipoprotein diacylglyceryl transferase, found in Streptococcus pneumoniae (strain P1031).